Here is a 7311-residue protein sequence, read N- to C-terminus: MAM and LDL-receptor class A domain-containing protein 2 (7311 aa).

MAM domains follow at residues Ala4 to Thr171, Leu199 to Pro361, Lys363 to Pro530, Gly532 to Val695, Tyr727 to Val887, Met889 to Leu1050, Gly1052 to Leu1220, Phe1228 to Ser1392, Gly1394 to Ala1557, Gly1559 to Gln1722, Asn1755 to Ser1918, Thr1920 to Leu2087, Gly2089 to Val2254, Asn2274 to Pro2437, Thr2439 to Pro2601, and Gly2603 to Gly2771. Positions Trp2461 to Thr2481 are disordered. Over residues Gly2466–Pro2475 the composition is skewed to low complexity. P-type domains are found at residues Gly2771 to Pro2817 and Ser2818 to Pro2862. Cystine bridges form between Cys2773-Cys2802, Cys2784-Cys2801, Cys2795-Cys2813, Cys2820-Cys2847, Cys2831-Cys2846, and Cys2841-Cys2858. MAM domains are found at residues Trp2883 to Pro3048, Arg3050 to Pro3214, Gly3216 to Ser3384, and Gly3429 to Leu3587. An LDL-receptor class A 1 domain is found at Ser3593–Tyr3628. 3 disulfides stabilise this stretch: Cys3594-Cys3605, Cys3600-Cys3618, and Cys3612-Cys3627. The 163-residue stretch at Tyr3632–Ser3794 folds into the MAM 21 domain. 2 LDL-receptor class A domains span residues Pro3814–Gly3850 and Ser4016–Ala4054. Cystine bridges form between Cys3815/Cys3827, Cys3822/Cys3840, and Cys3834/Cys3849. The region spanning Gly3850–Leu4011 is the MAM 22 domain. 3 disulfide bridges follow: Cys4017/Cys4029, Cys4024/Cys4042, and Cys4036/Cys4053. An MAM 23 domain is found at Glu4058–Pro4221. Residues Gly4239–Pro4276 form the LDL-receptor class A 4 domain. Intrachain disulfides connect Cys4240–Cys4253, Cys4247–Cys4266, and Cys4260–Cys4275. In terms of domain architecture, MAM 24 spans Ala4277–Glu4438. Residues Thr4444–Ala4483 form the LDL-receptor class A 5 domain. Cystine bridges form between Cys4445–Cys4458, Cys4453–Cys4471, and Cys4465–Cys4482. One can recognise an MAM 25 domain in the interval Asn4486–Val4646. 2 consecutive LDL-receptor class A domains span residues Pro4660–Gly4699 and Tyr4859–Ser4899. 5 cysteine pairs are disulfide-bonded: Cys4668-Cys4687, Cys4681-Cys4698, Cys4860-Cys4876, Cys4871-Cys4889, and Cys4883-Cys4898. One can recognise an MAM 26 domain in the interval Trp4700–Gly4862. The MAM 27 domain occupies Ser4903–Gln5063. An LDL-receptor class A 8 domain is found at Asn5085–Pro5122. Intrachain disulfides connect Cys5086/Cys5099, Cys5093/Cys5112, and Cys5106/Cys5121. The MAM 28 domain occupies His5123 to Leu5281. In terms of domain architecture, LDL-receptor class A 9 spans Ser5287–Gly5322. 3 disulfide bridges follow: Cys5288–Cys5299, Cys5294–Cys5312, and Cys5306–Cys5321. The region spanning Thr5326–Gln5489 is the MAM 29 domain. Positions Gln5513 to Ala5552 constitute an LDL-receptor class A 10 domain. 3 cysteine pairs are disulfide-bonded: Cys5514–Cys5529, Cys5521–Cys5542, and Cys5536–Cys5551. The MAM 30 domain maps to Thr5554–Pro5719. Residues Lys5725–Ser5763 enclose the LDL-receptor class A 11 domain. Disulfide bonds link Cys5726–Cys5738, Cys5733–Cys5751, and Cys5745–Cys5762. The region spanning Gly5768–Asp5935 is the MAM 31 domain. The region spanning Pro5957–Gly5993 is the LDL-receptor class A 12 domain. Cystine bridges form between Cys5958–Cys5970, Cys5965–Cys5983, and Cys5977–Cys5992. The 163-residue stretch at Ser5994–Val6156 folds into the MAM 32 domain. Residues Asn6014–Asp6034 are disordered. A compositionally biased stretch (polar residues) spans Lys6023 to Asp6034. Residues Thr6161–Ser6200 form the LDL-receptor class A 13 domain. Disulfide bonds link Cys6162-Cys6175, Cys6169-Cys6188, and Cys6182-Cys6199. Residues Ala6204–Lys6365 form the MAM 33 domain. One can recognise an LDL-receptor class A 14 domain in the interval Arg6377–Pro6414. 3 disulfides stabilise this stretch: Cys6378–Cys6391, Cys6385–Cys6404, and Cys6398–Cys6413. MAM domains lie at Ala6430–Lys6590, Leu6606–Phe6779, Gly6808–Phe6965, and Gly7173–Leu7311.

Component of the acid-insoluble and acid-soluble organic matrix of the aragonitic skeleton (at protein level).

The protein resides in the secreted. The sequence is that of MAM and LDL-receptor class A domain-containing protein 2 from Acropora millepora (Staghorn coral).